A 1058-amino-acid chain; its full sequence is SMC5-SMC6 complex localization factor protein 1 (1058 aa).

BRCT domains follow at residues 12–77 and 119–196; these read MTGF…IHSA and GAPG…GDFL. Residues 410-1058 are NSE5-like domain; mediates interaction with SLF2; that stretch reads PRGVLNLIES…MMCRSVMEFS (649 aa). ANK repeat units follow at residues 806-836, 840-869, and 874-903; these read KGET…DINV, AGWT…EVDL, and DGVT…PVLL. Lysine 931 participates in a covalent cross-link: Glycyl lysine isopeptide (Lys-Gly) (interchain with G-Cter in SUMO2).

As to quaternary structure, interacts (via N-terminus) with SLF2; this interaction links RAD18 to the SMC5-SMC6 complex. Interacts (via BRCT domains) with RAD18; this interaction occurs in a SLF2-independent manner. Interacts with SMC6. Interacts (via BRCT domains) with RAD18 (via C-terminus and phosphorylated form); this interaction is required for efficient repair of UV-induced DNA damage.

The protein resides in the nucleus. It is found in the cytoplasm. Its subcellular location is the cytoskeleton. The protein localises to the microtubule organizing center. It localises to the centrosome. Functionally, plays a role in the DNA damage response (DDR) pathway by regulating postreplication repair of UV-damaged DNA and genomic stability maintenance. The SLF1-SLF2 complex acts to link RAD18 with the SMC5-SMC6 complex at replication-coupled interstrand cross-links (ICL) and DNA double-strand breaks (DSBs) sites on chromatin during DNA repair in response to stalled replication forks. Promotes the recruitment of SLF2 and the SMC5-SMC6 complex to DNA lesions. This chain is SMC5-SMC6 complex localization factor protein 1, found in Homo sapiens (Human).